The primary structure comprises 896 residues: Translation initiation factor IF-2 (896 aa).

Residues 93–219 (VKRDPQEAER…RMAEENEKNW (127 aa)) are compositionally biased toward basic and acidic residues. The tract at residues 93-307 (VKRDPQEAER…GSALQQGFQK (215 aa)) is disordered. The segment covering 256–271 (GRSRSSKAARPAKKGN) has biased composition (basic residues). Residues 272–285 (KHAESKADREEARA) show a composition bias toward basic and acidic residues. The 170-residue stretch at 395–564 (PRAPVVTIMG…LLQAEVLELK (170 aa)) folds into the tr-type G domain. The segment at 404–411 (GHVDHGKT) is G1. GTP is bound at residue 404–411 (GHVDHGKT). Residues 429–433 (GITQH) are G2. The tract at residues 450 to 453 (DTPG) is G3. Residues 450–454 (DTPGH) and 504–507 (NKID) each bind GTP. A G4 region spans residues 504 to 507 (NKID). Residues 540–542 (SAK) form a G5 region.

Belongs to the TRAFAC class translation factor GTPase superfamily. Classic translation factor GTPase family. IF-2 subfamily.

It is found in the cytoplasm. In terms of biological role, one of the essential components for the initiation of protein synthesis. Protects formylmethionyl-tRNA from spontaneous hydrolysis and promotes its binding to the 30S ribosomal subunits. Also involved in the hydrolysis of GTP during the formation of the 70S ribosomal complex. This chain is Translation initiation factor IF-2, found in Klebsiella pneumoniae subsp. pneumoniae (strain ATCC 700721 / MGH 78578).